The chain runs to 540 residues: GMP synthase [glutamine-hydrolyzing] (540 aa).

Positions 29 to 222 (KILIVDFGSQ…VRKVAGLTGD (194 aa)) constitute a Glutamine amidotransferase type-1 domain. Cys-106 serves as the catalytic Nucleophile. Active-site residues include His-196 and Glu-198. The GMPS ATP-PPase domain occupies 223 to 415 (WTMRAFREEA…LGLPEIFVGR (193 aa)). 250-256 (SGGVDSA) contacts ATP.

Homodimer.

The enzyme catalyses XMP + L-glutamine + ATP + H2O = GMP + L-glutamate + AMP + diphosphate + 2 H(+). It participates in purine metabolism; GMP biosynthesis; GMP from XMP (L-Gln route): step 1/1. Catalyzes the synthesis of GMP from XMP. This chain is GMP synthase [glutamine-hydrolyzing], found in Rhodopseudomonas palustris (strain HaA2).